The sequence spans 662 residues: Leucine aminopeptidase 2 (662 aa).

Residues Gln-178 to Glu-180 and Pro-304 to Glu-309 each bind a peptide. Zn(2+) is bound at residue His-333. Catalysis depends on Glu-334, which acts as the Proton acceptor. Zn(2+) contacts are provided by His-337 and Glu-356. Tyr-422 acts as the Proton donor in catalysis.

The protein belongs to the peptidase M1 family. Requires Zn(2+) as cofactor.

It is found in the cytoplasm. The protein localises to the nucleus. The enzyme catalyses an epoxide + H2O = an ethanediol. Aminopeptidase that preferentially cleaves di- and tripeptides. Also has low epoxide hydrolase activity (in vitro). Can hydrolyze the epoxide leukotriene LTA(4) but it forms preferentially 5,6-dihydroxy-7,9,11,14-eicosatetraenoic acid rather than the cytokine leukotriene B(4) as the product compared to the homologous mammalian enzyme (in vitro). The sequence is that of Leucine aminopeptidase 2 from Kluyveromyces lactis (strain ATCC 8585 / CBS 2359 / DSM 70799 / NBRC 1267 / NRRL Y-1140 / WM37) (Yeast).